Reading from the N-terminus, the 318-residue chain is MVKVGIIGGGGYTAGELIRLLINHPNVNIIFVHSYSNARNKIIDIHTGLIGEMDLIFSDSYDLNEIDVLFLCSAHGDSKKFIETHTIHTELKIIDLSIDFRHKENAGGFVYGLPELNKEIIRKAQYIANPGCFATAVQLALLPLAKKNLLRSEIHINAITGSTGAGVRPTASSHFSWRNNNISVYKAFTHQHLKEITESLNYEPSRFNFIPVRGNFSRGIFATVYTESNLDIKDAVQIYSNYYEDSAFTFISDKNPDLKQVINTNKCILHLEKHGNKLFIISIIDNLLKGASGQAVQNFNLICGLNEKTGLFLKANAF.

Residue Cys132 is part of the active site.

The protein belongs to the NAGSA dehydrogenase family. Type 1 subfamily.

The protein resides in the cytoplasm. The catalysed reaction is N-acetyl-L-glutamate 5-semialdehyde + phosphate + NADP(+) = N-acetyl-L-glutamyl 5-phosphate + NADPH + H(+). It functions in the pathway amino-acid biosynthesis; L-arginine biosynthesis; N(2)-acetyl-L-ornithine from L-glutamate: step 3/4. Functionally, catalyzes the NADPH-dependent reduction of N-acetyl-5-glutamyl phosphate to yield N-acetyl-L-glutamate 5-semialdehyde. In Azobacteroides pseudotrichonymphae genomovar. CFP2, this protein is N-acetyl-gamma-glutamyl-phosphate reductase.